The primary structure comprises 329 residues: uncharacterized protein (329 aa).

Coiled-coil stretches lie at residues 57–119 (KKEE…LQEV) and 224–250 (AQRQ…LGNV).

This is an uncharacterized protein from Macaca fascicularis (Crab-eating macaque).